The following is a 496-amino-acid chain: Fusarielin biosynthesis cluster transcription factor FSL7 (496 aa).

Positions 16–46 (CDRCHELKIRCTRTGGTESRCDRCEKNDIDC) form a DNA-binding region, zn(2)-C6 fungal-type. Disordered regions lie at residues 57–102 (PKSQ…SINS), 189–224 (RSINHRSGSENESMEGNAELQSTQSASGSPQEEDQM), 281–307 (ANHTSSSSSSNSTTVDGPSEIRNQSRS), 348–379 (GSTSSSTYNDTTAHPSSASLPSQTGGPTKPRT), and 444–470 (MTREQHVSTGHGPDRHTSPVLSSAQAA). Composition is skewed to polar residues over residues 65 to 89 (GPNTTARQNDTTTRGRIQQEQQEQM) and 207 to 218 (ELQSTQSASGSP). Residues 281-294 (ANHTSSSSSSNSTT) are compositionally biased toward low complexity. Positions 355–379 (YNDTTAHPSSASLPSQTGGPTKPRT) are enriched in polar residues. A compositionally biased stretch (basic and acidic residues) spans 444-460 (MTREQHVSTGHGPDRHT).

It localises to the nucleus. In terms of biological role, transcription regulator that specifically up-regulates the gene cluster that mediates the biosynthesis of fusarielins F, G and H, decaketide compounds with 5 methylations and a decaline core that act as mycoestrogens as they stimulate growth of MCF-7 breast cancer cells. Probably binds the 5'-CGGNNNCCG-3' motif present in the promoter of all the cluster genes. The polypeptide is Fusarielin biosynthesis cluster transcription factor FSL7 (Gibberella zeae (strain ATCC MYA-4620 / CBS 123657 / FGSC 9075 / NRRL 31084 / PH-1) (Wheat head blight fungus)).